The following is a 177-amino-acid chain: Large ribosomal subunit protein uL6 (177 aa).

Belongs to the universal ribosomal protein uL6 family. Part of the 50S ribosomal subunit.

This protein binds to the 23S rRNA, and is important in its secondary structure. It is located near the subunit interface in the base of the L7/L12 stalk, and near the tRNA binding site of the peptidyltransferase center. This chain is Large ribosomal subunit protein uL6, found in Erwinia tasmaniensis (strain DSM 17950 / CFBP 7177 / CIP 109463 / NCPPB 4357 / Et1/99).